Reading from the N-terminus, the 361-residue chain is Single-stranded DNA-binding protein 2 (361 aa).

An N6-acetyllysine modification is found at Lys-6. Positions 18 to 50 constitute a LisH domain; it reads AREKLALYVYEYLLHVGAQKSAQTFLSEIRWEK. Disordered regions lie at residues 147–171 and 194–361; these read GGVP…HPNM and GAMR…TMSV. The segment covering 204 to 219 has biased composition (gly residues); the sequence is GGPGMPGMNMGPGGGR. The span at 225 to 236 shows a compositional bias: polar residues; the sequence is TNANSIPYSSAS. Residues 246–256 are compositionally biased toward pro residues; the sequence is GGGPPGTPIMP. A compositionally biased stretch (gly residues) spans 289-299; it reads GSDGPMGGLGG. Polar residues predominate over residues 317 to 332; the sequence is ISKNSPNNMSLSNQPG. Residue Ser-321 is modified to Phosphoserine. At Thr-333 the chain carries Phosphothreonine. Positions 346 to 361 are enriched in polar residues; sequence NPFQSESYSPSMTMSV.

Ubiquitous.

It is found in the nucleus. This is Single-stranded DNA-binding protein 2 (SSBP2) from Homo sapiens (Human).